Reading from the N-terminus, the 311-residue chain is MVGLQPSERPPTTSVKFLAAGTAACFADLLTFPLDTAKVRLQIQGENQAALAARSAQYRGVLGTILTMVRTEGPRSLYSGLVAGLQRQMSFASIRIGLYDSVKQFYTPKGSDHSSIITRILAGCTTGAMAVTCAQPTDVVKIRFQASMHTGLGGNRKYSGTMDAYRTIAREEGVRGLWKGILPNITRNAIVNCGEMVTYDIIKEKLLDYHLLTDNFPCHFVSAFGAGFCATLVASPVDVVKTRYMNSPPGQYHSPFDCMLKMVTQEGPTAFYKGFTPSFLRLGSWNVVMFVTYEQMKRALMKVQMLRDSPF.

At 1–10 (MVGLQPSERP) the chain is on the mitochondrial intermembrane side. The helical transmembrane segment at 11–32 (PTTSVKFLAAGTAACFADLLTF) threads the bilayer. Solcar repeat units lie at residues 11–105 (PTTS…VKQF), 114–205 (SSII…IKEK), and 214–299 (DNFP…MKRA). The Mitochondrial matrix segment spans residues 33–76 (PLDTAKVRLQIQGENQAALAARSAQYRGVLGTILTMVRTEGPRS). The helical transmembrane segment at 77-99 (LYSGLVAGLQRQMSFASIRIGLY) threads the bilayer. The Mitochondrial intermembrane portion of the chain corresponds to 100-119 (DSVKQFYTPKGSDHSSIITR). The chain crosses the membrane as a helical span at residues 120–136 (ILAGCTTGAMAVTCAQP). The Mitochondrial matrix portion of the chain corresponds to 137–182 (TDVVKIRFQASMHTGLGGNRKYSGTMDAYRTIAREEGVRGLWKGIL). Residues 183 to 199 (PNITRNAIVNCGEMVTY) traverse the membrane as a helical segment. Topologically, residues 200 to 216 (DIIKEKLLDYHLLTDNF) are mitochondrial intermembrane. The chain crosses the membrane as a helical span at residues 217 to 236 (PCHFVSAFGAGFCATLVASP). The Mitochondrial matrix portion of the chain corresponds to 237–270 (VDVVKTRYMNSPPGQYHSPFDCMLKMVTQEGPTA). A helical transmembrane segment spans residues 271–293 (FYKGFTPSFLRLGSWNVVMFVTY). The purine nucleotide binding stretch occupies residues 278–300 (SFLRLGSWNVVMFVTYEQMKRAL). Topologically, residues 294–311 (EQMKRALMKVQMLRDSPF) are mitochondrial intermembrane.

Belongs to the mitochondrial carrier (TC 2.A.29) family. As to quaternary structure, interacts with HAX1; the interaction is direct and calcium-dependent.

It localises to the mitochondrion inner membrane. Putative transmembrane transporter that plays a role in mitochondrial metabolism via an as yet unclear mechanism. Originally, this mitochondrial protein was thought to act as a proton transmembrane transporter from the mitochondrial intermembrane space into the matrix, causing proton leaks through the inner mitochondrial membrane, thereby uncoupling mitochondrial membrane potential generation from ATP synthesis. However, this function is controversial and uncoupling may not be the function, or at least not the main function, but rather a consequence of more conventional metabolite transporter activity. The polypeptide is Putative mitochondrial transporter UCP3 (Bos taurus (Bovine)).